The following is a 964-amino-acid chain: Chaperone protein ClpB4, mitochondrial (964 aa).

Residues 1 to 39 (MALRRLSKSVSSAIKAQYTLSRPSPLLRSRSLSSSPHYT) constitute a mitochondrion transit peptide. One can recognise a Clp R domain in the interval 83-227 (VNQNEFTEMA…KDAIKDVRGD (145 aa)). 2 repeat regions span residues 88-153 (FTEM…ISKQ) and 164-227 (LGSS…VRGD). An i region spans residues 242 to 490 (LEKYGNDLTE…KLKMEITSKP (249 aa)). ATP-binding positions include 287–294 (GEPGVGKT) and 690–697 (GPTGVGKT). The II stretch occupies residues 616–807 (VTDLDIAEIV…VVIMTSNIGS (192 aa)).

This sequence belongs to the ClpA/ClpB family.

The protein resides in the mitochondrion. Its function is as follows. Molecular chaperone that does not seem to be involved in heat stress response or tolerance. The protein is Chaperone protein ClpB4, mitochondrial (CLPB4) of Arabidopsis thaliana (Mouse-ear cress).